The chain runs to 427 residues: Gamma-glutamyl phosphate reductase (427 aa).

Belongs to the gamma-glutamyl phosphate reductase family.

The protein localises to the cytoplasm. It carries out the reaction L-glutamate 5-semialdehyde + phosphate + NADP(+) = L-glutamyl 5-phosphate + NADPH + H(+). Its pathway is amino-acid biosynthesis; L-proline biosynthesis; L-glutamate 5-semialdehyde from L-glutamate: step 2/2. In terms of biological role, catalyzes the NADPH-dependent reduction of L-glutamate 5-phosphate into L-glutamate 5-semialdehyde and phosphate. The product spontaneously undergoes cyclization to form 1-pyrroline-5-carboxylate. The sequence is that of Gamma-glutamyl phosphate reductase from Rhizobium etli (strain ATCC 51251 / DSM 11541 / JCM 21823 / NBRC 15573 / CFN 42).